Reading from the N-terminus, the 466-residue chain is Transcription factor SOX-10 (466 aa).

Disordered stretches follow at residues 1–67 (MAEE…DDDK), 160–198 (LRMQ…TDQG), 213–275 (DHRH…DFGN), 355–375 (QVKT…QPST), and 433–466 (RPLY…LSRP). Residues 23–32 (LSPSSAPSLG) are compositionally biased toward low complexity. Ser-24 carries the post-translational modification Phosphoserine. Residues 62-102 (EADDDKFPVCIREAVSQVLSGYDWTLVPMPVRVNGASKSKP) form a dimerization (DIM) region. The segment at residues 104–172 (VKRPMNAFMV…QHKKDHPDYK (69 aa)) is a DNA-binding region (HMG box). Basic and acidic residues-rich tracts occupy residues 160–173 (LRMQ…DYKY) and 254–271 (ADPK…KPHI). Positions 228–310 (PEHPSGQSHG…LPPNGHPGHV (83 aa)) are transactivation domain (TAM). A transactivation domain (TAC) region spans residues 353-466 (KAQVKTETTG…QPVYTTLSRP (114 aa)). The span at 440 to 466 (SDPSPSGPQSHSPTHWEQPVYTTLSRP) shows a compositional bias: polar residues.

In terms of assembly, monomer. Interacts with Armcx3 at the mitochondrial outer membrane surface. Interacts with PAX3. Predominant expression in glial cells of the nervous system.

It is found in the cytoplasm. Its subcellular location is the nucleus. The protein localises to the mitochondrion outer membrane. Functionally, transcription factor that plays a central role in developing and mature glia. Specifically activates expression of myelin genes, during oligodendrocyte (OL) maturation, such as DUSP15 and MYRF, thereby playing a central role in oligodendrocyte maturation and CNS myelination. Once induced, MYRF cooperates with SOX10 to implement the myelination program. Transcriptional activator of MITF, acting synergistically with PAX3. Transcriptional activator of MBP, via binding to the gene promoter. This chain is Transcription factor SOX-10 (Sox10), found in Rattus norvegicus (Rat).